Consider the following 391-residue polypeptide: Putative glutamate--cysteine ligase 2-2 (391 aa).

It belongs to the glutamate--cysteine ligase type 2 family. YbdK subfamily.

It carries out the reaction L-cysteine + L-glutamate + ATP = gamma-L-glutamyl-L-cysteine + ADP + phosphate + H(+). ATP-dependent carboxylate-amine ligase which exhibits weak glutamate--cysteine ligase activity. The protein is Putative glutamate--cysteine ligase 2-2 of Saccharopolyspora erythraea (strain ATCC 11635 / DSM 40517 / JCM 4748 / NBRC 13426 / NCIMB 8594 / NRRL 2338).